Consider the following 378-residue polypeptide: Wnt inhibitory factor 1 (378 aa).

The N-terminal stretch at 1 to 28 (MAFRTPAVQLHLKACVLLLLGGLLEAAY) is a signal peptide. The WIF domain maps to 36 to 175 (MWIDANQARI…PHNAIFFKTC (140 aa)). Residue Asn-86 is glycosylated (N-linked (GlcNAc...) asparagine). 6 disulfide bridges follow: Cys-138/Cys-175, Cys-180/Cys-190, Cys-184/Cys-196, Cys-212/Cys-222, Cys-216/Cys-228, and Cys-230/Cys-239. EGF-like domains follow at residues 176–205 (QRAK…FYGV), 208–240 (EKAL…SSCE), 243–272 (NCST…VRCE), 272–304 (ELSK…DLCS), and 305–336 (KAVC…RHCN). Asn-243 carries an N-linked (GlcNAc...) asparagine glycan. 9 cysteine pairs are disulfide-bonded: Cys-244–Cys-254, Cys-248–Cys-260, Cys-262–Cys-271, Cys-276–Cys-286, Cys-280–Cys-292, Cys-294–Cys-303, Cys-308–Cys-318, Cys-312–Cys-324, and Cys-326–Cys-335. Residues 343–378 (VSNSQRVSPSKHKSPSVAAAKEAPETSQPSETNYVV) form a disordered region. Over residues 367 to 378 (ETSQPSETNYVV) the composition is skewed to polar residues.

Highly expressed in unsegmented paraxial mesoderm.

The protein resides in the secreted. Binds to WNT proteins and inhibits their activities. May be involved in mesoderm segmentation. The chain is Wnt inhibitory factor 1 (wif1) from Danio rerio (Zebrafish).